Reading from the N-terminus, the 24-residue chain is Chlorate reductase subunit beta (24 aa).

Heterotrimer of alpha, beta and gamma subunits. [3Fe-4S] cluster serves as cofactor. [4Fe-4S] cluster is required as a cofactor.

Its subcellular location is the cytoplasm. Functionally, electron transfer subunit of the chlorate reductase. This Stutzerimonas chloritidismutans (Pseudomonas chloritidismutans) protein is Chlorate reductase subunit beta.